A 130-amino-acid polypeptide reads, in one-letter code: Small ribosomal subunit protein uS8 (130 aa).

Belongs to the universal ribosomal protein uS8 family. In terms of assembly, part of the 30S ribosomal subunit.

Functionally, one of the primary rRNA binding proteins, it binds directly to 16S rRNA central domain where it helps coordinate assembly of the platform of the 30S subunit. This Methanococcus aeolicus (strain ATCC BAA-1280 / DSM 17508 / OCM 812 / Nankai-3) protein is Small ribosomal subunit protein uS8.